We begin with the raw amino-acid sequence, 115 residues long: NADH-ubiquinone oxidoreductase chain 3 (115 aa).

The next 3 membrane-spanning stretches (helical) occupy residues 4-24, 55-75, and 87-107; these read LTAL…AFWL, FFLV…LLPL, and MMLT…YEWM.

The protein belongs to the complex I subunit 3 family. As to quaternary structure, core subunit of respiratory chain NADH dehydrogenase (Complex I) which is composed of 45 different subunits. Interacts with TMEM186. Interacts with TMEM242.

The protein resides in the mitochondrion inner membrane. The catalysed reaction is a ubiquinone + NADH + 5 H(+)(in) = a ubiquinol + NAD(+) + 4 H(+)(out). Functionally, core subunit of the mitochondrial membrane respiratory chain NADH dehydrogenase (Complex I) which catalyzes electron transfer from NADH through the respiratory chain, using ubiquinone as an electron acceptor. Essential for the catalytic activity of complex I. The sequence is that of NADH-ubiquinone oxidoreductase chain 3 from Peromyscus boylii (Brush deermouse).